The chain runs to 1002 residues: DNA-directed RNA polymerase 1, mitochondrial (1002 aa).

Residues M1–A21 constitute a mitochondrion transit peptide. Active-site residues include D703, K778, and D935.

The protein belongs to the phage and mitochondrial RNA polymerase family. The highest levels of expression are detected in the mature leaves. The level of expression is lowest in the cotyledons.

It is found in the mitochondrion. It catalyses the reaction RNA(n) + a ribonucleoside 5'-triphosphate = RNA(n+1) + diphosphate. Its function is as follows. DNA-dependent RNA polymerase catalyzes the transcription of DNA into RNA using the four ribonucleoside triphosphates as substrates. In Nicotiana sylvestris (Wood tobacco), this protein is DNA-directed RNA polymerase 1, mitochondrial (RPOT1).